The chain runs to 365 residues: Protein RecA (365 aa).

73-80 (GPESSGKT) contacts ATP.

It belongs to the RecA family.

The protein resides in the cytoplasm. Its function is as follows. Can catalyze the hydrolysis of ATP in the presence of single-stranded DNA, the ATP-dependent uptake of single-stranded DNA by duplex DNA, and the ATP-dependent hybridization of homologous single-stranded DNAs. It interacts with LexA causing its activation and leading to its autocatalytic cleavage. The chain is Protein RecA from Prochlorococcus marinus (strain MIT 9301).